The primary structure comprises 335 residues: Fructose-1,6-bisphosphatase class 1 (335 aa).

Mg(2+)-binding residues include E92, D114, L116, and D117. Substrate-binding positions include 117–120, N210, Y242, and K274; that span reads DGSS. Residue E280 coordinates Mg(2+).

Belongs to the FBPase class 1 family. As to quaternary structure, homotetramer. The cofactor is Mg(2+).

The protein resides in the cytoplasm. The enzyme catalyses beta-D-fructose 1,6-bisphosphate + H2O = beta-D-fructose 6-phosphate + phosphate. Its pathway is carbohydrate biosynthesis; gluconeogenesis. The polypeptide is Fructose-1,6-bisphosphatase class 1 (Lawsonia intracellularis (strain PHE/MN1-00)).